Here is a 159-residue protein sequence, read N- to C-terminus: Ribosomal RNA large subunit methyltransferase H (159 aa).

S-adenosyl-L-methionine contacts are provided by residues Leu-76, Gly-108, and 127 to 132 (LSDMTF).

Belongs to the RNA methyltransferase RlmH family. As to quaternary structure, homodimer.

The protein localises to the cytoplasm. The enzyme catalyses pseudouridine(1915) in 23S rRNA + S-adenosyl-L-methionine = N(3)-methylpseudouridine(1915) in 23S rRNA + S-adenosyl-L-homocysteine + H(+). Its function is as follows. Specifically methylates the pseudouridine at position 1915 (m3Psi1915) in 23S rRNA. This Acetivibrio thermocellus (strain ATCC 27405 / DSM 1237 / JCM 9322 / NBRC 103400 / NCIMB 10682 / NRRL B-4536 / VPI 7372) (Clostridium thermocellum) protein is Ribosomal RNA large subunit methyltransferase H.